The following is a 1052-amino-acid chain: Membrane-bound transcription factor site-1 protease (1052 aa).

The first 17 residues, 1-17 (MKLVNIWLLLLVVLLCG), serve as a signal peptide directing secretion. A propeptide spanning residues 18–186 (KKHLGDRLGK…TGRHSSRRLL (169 aa)) is cleaved from the precursor. The N-linked (GlcNAc...) asparagine glycan is linked to Asn148. Residue Ser168 is modified to Phosphoserine. Residues 187-999 (RAIPRQVAQT…MPGRYNQEVG (813 aa)) are Lumenal-facing. One can recognise a Peptidase S8 domain in the interval 190–472 (PRQVAQTLQA…HGKLDLLRAY (283 aa)). The active-site Charge relay system is Asp218. An N-linked (GlcNAc...) asparagine glycan is attached at Asn236. The active-site Charge relay system is His249. N-linked (GlcNAc...) asparagine glycosylation is present at Asn305. Ser414 (charge relay system) is an active-site residue. Residues Asn515 and Asn728 are each glycosylated (N-linked (GlcNAc...) asparagine). Residues 877 to 887 (PSLSHSGNRQR) are compositionally biased toward polar residues. The tract at residues 877–900 (PSLSHSGNRQRPPSGAGLAPPERM) is disordered. An N-linked (GlcNAc...) asparagine glycan is attached at Asn939. A helical transmembrane segment spans residues 1000–1022 (QTIPVFAFLGAMVALAFFVVQIS). Over 1023–1052 (KAKSRPKRRRPRAKRPQLAQQAHPARTPSV) the chain is Cytoplasmic. The span at 1026–1037 (SRPKRRRPRAKR) shows a compositional bias: basic residues. Residues 1026–1052 (SRPKRRRPRAKRPQLAQQAHPARTPSV) are disordered.

This sequence belongs to the peptidase S8 family. As to quaternary structure, interacts with LYSET; this interaction bridges GNPTAB to MBTPS1. Ca(2+) is required as a cofactor. In terms of processing, the 148 kDa zymogen is processed progressively into two membrane-bound 120 and 106 kDa forms in the endoplasmic reticulum, and late into a secreted 98 kDa form. The propeptide is autocatalytically removed through an intramolecular cleavage after Leu-186. Further cleavage generates 14, 10, and 8 kDa intermediates. As to expression, widely expressed. In adult rat, highly expressed in anterior pituitary, thyroid and adrenal glands and in liver. In 2-day old rat, detected in developing skin, striated muscles, cardiac muscles, bones, teeth and internal organs. Highly expressed in retina, cerebellum, pituitary, submaxillary, thyroid and adrenal glands, molars, thymus, kidney and intestine.

It is found in the endoplasmic reticulum membrane. It localises to the golgi apparatus membrane. It carries out the reaction Processes precursors containing basic and hydrophobic/aliphatic residues at P4 and P2, respectively, with a relatively relaxed acceptance of amino acids at P1 and P3.. With respect to regulation, inhibited by divalent copper and zinc ions, but not by nickel or cobalt. Inhibited by its prosegment, but not smaller fragments. Inhibited by 4-(2-aminoethyl)benzenesulfonyl fluoride (AEBSF), a serine protease inhibitor. Functionally, serine protease that cleaves after hydrophobic or small residues, provided that Arg or Lys is in position P4: known substrates include SREBF1/SREBP1, SREBF2/SREBP2, BDNF, GNPTAB, ATF6, ATF6B and FAM20C. Cleaves substrates after Arg-Ser-Val-Leu (SREBP2), Arg-His-Leu-Leu (ATF6), Arg-Gly-Leu-Thr (BDNF) and its own propeptide after Arg-Arg-Leu-Leu. Catalyzes the first step in the proteolytic activation of the sterol regulatory element-binding proteins (SREBPs) SREBF1/SREBP1 and SREBF2/SREBP2. Also mediates the first step in the proteolytic activation of the cyclic AMP-dependent transcription factor ATF-6 (ATF6 and ATF6B). Mediates the protein cleavage of GNPTAB into subunit alpha and beta, thereby participating in biogenesis of lysosomes. Cleaves the propeptide from FAM20C which is required for FAM20C secretion from the Golgi apparatus membrane and for enhancement of FAM20C kinase activity, promoting osteoblast differentiation and biomineralization. Involved in the regulation of M6P-dependent Golgi-to-lysosome trafficking of lysosomal enzymes. It is required for the activation of CREB3L2/BBF2H7, a transcriptional activator of MIA3/TANGO and other genes controlling mega vesicle formation. Therefore, it plays a key role in the regulation of mega vesicle-mediated collagen trafficking. In astrocytes and osteoblasts, upon DNA damage and ER stress, mediates the first step of the regulated intramembrane proteolytic activation of the transcription factor CREB3L1, leading to the inhibition of cell-cycle progression. This Rattus norvegicus (Rat) protein is Membrane-bound transcription factor site-1 protease (Mbtps1).